The sequence spans 53 residues: MPITLDPEKLAIVMKHRFQYKICRECGAKNPPDAVKCRRCRSRNLRPKRFRKK.

This sequence belongs to the eukaryotic ribosomal protein eL40 family.

This Pyrobaculum aerophilum (strain ATCC 51768 / DSM 7523 / JCM 9630 / CIP 104966 / NBRC 100827 / IM2) protein is Large ribosomal subunit protein eL40.